The primary structure comprises 28 residues: trp operon leader peptide (28 aa).

Functionally, this protein is involved in control of the biosynthesis of tryptophan. The polypeptide is trp operon leader peptide (trpL) (Serratia marcescens).